The primary structure comprises 126 residues: Large ribosomal subunit protein mL52 (126 aa).

The transit peptide at 1-28 (MLKITKICLASSATSTAQRSIALTAPRA) directs the protein to the mitochondrion.

It belongs to the mitochondrion-specific ribosomal protein mL52 family. Component of the mitochondrial ribosome large subunit (39S) which comprises a 16S rRNA and about 50 distinct proteins.

It is found in the mitochondrion. The polypeptide is Large ribosomal subunit protein mL52 (mRpL52) (Drosophila melanogaster (Fruit fly)).